The primary structure comprises 319 residues: Pectinesterase (319 aa).

Pyrrolidone carboxylic acid is present on Gln-1. Thr-83 and Gln-113 together coordinate substrate. Catalysis depends on Asp-136, which acts as the Proton donor. A disulfide bridge connects residues Cys-150 and Cys-170. Catalysis depends on Asp-157, which acts as the Nucleophile. Positions 225 and 227 each coordinate substrate.

Belongs to the pectinesterase family.

It localises to the secreted. The protein resides in the cell wall. It catalyses the reaction [(1-&gt;4)-alpha-D-galacturonosyl methyl ester](n) + n H2O = [(1-&gt;4)-alpha-D-galacturonosyl](n) + n methanol + n H(+). The protein operates within glycan metabolism; pectin degradation; 2-dehydro-3-deoxy-D-gluconate from pectin: step 1/5. Catalyzes the deesterification of methyl-esterified D-galactosiduronic acid units in pectic compounds. It participates in modulating cell wall during fruit ripening, cell wall extension during pollen germination, and in defense mechanisms against pathogens. The chain is Pectinesterase from Daucus carota (Wild carrot).